We begin with the raw amino-acid sequence, 354 residues long: Cysteine proteinase A (354 aa).

The first 24 residues, 1-24, serve as a signal peptide directing secretion; sequence MARRNPLLFAIVVTILFVVCYGSA. The propeptide at 25–125 is activation peptide; it reads LIAQTPPPVD…HKEDVHVDDS (101 aa). Intrachain disulfides connect Cys-150–Cys-191, Cys-184–Cys-229, and Cys-282–Cys-330. Residue Cys-153 is part of the active site. Residue Asn-208 is glycosylated (N-linked (GlcNAc...) asparagine). Catalysis depends on residues His-289 and Asn-309.

The protein belongs to the peptidase C1 family.

This Leishmania mexicana protein is Cysteine proteinase A (LMCPA).